The following is a 465-amino-acid chain: Ribosomal oxygenase 2 (465 aa).

Positions 139-271 (QPQRYKDELW…NSWGDCLLDS (133 aa)) constitute a JmjC domain. Fe cation-binding residues include His179, Asp181, and His240. Residue Ser309 is modified to Phosphoserine.

It belongs to the ROX family. MINA53 subfamily. Requires Fe(2+) as cofactor. Predominantly expressed in testis. Expressed at high levels in spleen, thymus, and colon, but barely detectable in brain, skeletal muscle, and seminal vesicle (at protein level).

The protein resides in the nucleus. The protein localises to the nucleolus. The enzyme catalyses L-histidyl-[ribosomal protein uL15] + 2-oxoglutarate + O2 = (3S)-3-hydroxy-L-histidyl-[ribosomal protein uL15] + succinate + CO2. The catalysed reaction is L-histidyl-[protein] + 2-oxoglutarate + O2 = (3S)-3-hydroxy-L-histidyl-[protein] + succinate + CO2. Its function is as follows. Oxygenase that can act as both a histone lysine demethylase and a ribosomal histidine hydroxylase. Is involved in the demethylation of trimethylated 'Lys-9' on histone H3 (H3K9me3), leading to an increase in ribosomal RNA expression. Also catalyzes the hydroxylation of 60S ribosomal protein L27a on 'His-39'. May play an important role in cell growth and survival. May be involved in ribosome biogenesis, most likely during the assembly process of pre-ribosomal particles. The polypeptide is Ribosomal oxygenase 2 (Mus musculus (Mouse)).